The primary structure comprises 202 residues: Dephospho-CoA kinase (202 aa).

The DPCK domain maps to 5–202; that stretch reads VIGLTGGIGS…KKYLTLTKMV (198 aa). An ATP-binding site is contributed by 13-18; the sequence is GSGKTT.

Belongs to the CoaE family.

The protein localises to the cytoplasm. The catalysed reaction is 3'-dephospho-CoA + ATP = ADP + CoA + H(+). The protein operates within cofactor biosynthesis; coenzyme A biosynthesis; CoA from (R)-pantothenate: step 5/5. Functionally, catalyzes the phosphorylation of the 3'-hydroxyl group of dephosphocoenzyme A to form coenzyme A. The protein is Dephospho-CoA kinase of Colwellia psychrerythraea (strain 34H / ATCC BAA-681) (Vibrio psychroerythus).